Here is a 348-residue protein sequence, read N- to C-terminus: tRNA pseudouridine synthase D (348 aa).

F27 provides a ligand contact to substrate. The active-site Nucleophile is D80. N129 is a substrate binding site. The 149-residue stretch at G155–L303 folds into the TRUD domain. F329 is a binding site for substrate.

Belongs to the pseudouridine synthase TruD family.

The catalysed reaction is uridine(13) in tRNA = pseudouridine(13) in tRNA. In terms of biological role, responsible for synthesis of pseudouridine from uracil-13 in transfer RNAs. In Pectobacterium atrosepticum (strain SCRI 1043 / ATCC BAA-672) (Erwinia carotovora subsp. atroseptica), this protein is tRNA pseudouridine synthase D.